A 158-amino-acid polypeptide reads, in one-letter code: Cytochrome b562 (158 aa).

A run of 4 helical transmembrane segments spans residues 12–32 (ITLHWAIAGLVLFNYIFGETM), 46–66 (AGVGHYLHVVVGLAVLVLTLV), 87–107 (VAAGLQGLLYLLTLLVPALGM), and 121–141 (HVLAANAIMLLALVHAVSALF). Residues His-15 and His-53 each coordinate heme b. 2 residues coordinate heme b: His-121 and His-135.

This sequence belongs to the cytochrome b561 family. Homodimer. Requires heme b as cofactor.

The protein localises to the cell membrane. Its function is as follows. Cytochrome b562 is an integral component of the cytochrome b-c1 complex in the cyclic electron transfer system of photosynthetic bacteria. This is Cytochrome b562 from Cereibacter sphaeroides (strain ATCC 17023 / DSM 158 / JCM 6121 / CCUG 31486 / LMG 2827 / NBRC 12203 / NCIMB 8253 / ATH 2.4.1.) (Rhodobacter sphaeroides).